Here is a 338-residue protein sequence, read N- to C-terminus: Phenylalanine--tRNA ligase alpha subunit (338 aa).

The interval 71–101 is disordered; sequence QFEEKRSSLSQQTSSSDTYQSLPDLTLPGRQ. Low complexity predominate over residues 78 to 92; sequence SLSQQTSSSDTYQSL. Glu-253 provides a ligand contact to Mg(2+).

It belongs to the class-II aminoacyl-tRNA synthetase family. Phe-tRNA synthetase alpha subunit type 1 subfamily. As to quaternary structure, tetramer of two alpha and two beta subunits. The cofactor is Mg(2+).

Its subcellular location is the cytoplasm. It carries out the reaction tRNA(Phe) + L-phenylalanine + ATP = L-phenylalanyl-tRNA(Phe) + AMP + diphosphate + H(+). In Desulfotalea psychrophila (strain LSv54 / DSM 12343), this protein is Phenylalanine--tRNA ligase alpha subunit.